The chain runs to 255 residues: Urease accessory protein UreD 1 (255 aa).

The protein belongs to the UreD family. UreD, UreF and UreG form a complex that acts as a GTP-hydrolysis-dependent molecular chaperone, activating the urease apoprotein by helping to assemble the nickel containing metallocenter of UreC. The UreE protein probably delivers the nickel.

It is found in the cytoplasm. Functionally, required for maturation of urease via the functional incorporation of the urease nickel metallocenter. This chain is Urease accessory protein UreD 1, found in Streptomyces griseus subsp. griseus (strain JCM 4626 / CBS 651.72 / NBRC 13350 / KCC S-0626 / ISP 5235).